Here is a 1175-residue protein sequence, read N- to C-terminus: MEEDKIRALTTTLKPNETQAQKLLKAHIAVLVSALGGIDKTSEIVPPPYKLGHDALACLKDIKRWIRAVDERQHNYEVALACAESGLVQNDLIIILCQWDSQMQNKKQKTDTMVRNKTAMEKIMLSCLEILVLLTWPMEFGTNLSENQKLLFAQVRKIQVLHKKHILTYNDGQVLKAVIRLALPVIAKTRIDREPRDNQILRLVLYFTRNLLAIEPENDSISTKTNNKRATPSSNLPNGVSPDDISINNLLRVFKKNKVLMLLLTITGSINSEFEKDLFNEICLESVYLLIKGLEAKDVLVNKPTSTTKMNTKTAAAAATTATTATTTTTNTTSSVDISATTPLQPLSSTVGLQLQDLLNTEAKKRQSQKQHIATRHGKFGTLLSIRSADANSYVVSGEEALINSNGTMDKLDKSKTWKMKNHFTYDSDEFVKTNSPIYLNAQGRQILSYFIEEFLSGGCFNNLIESMTSKLTSQLEYSLIDELTQASYFYTIAWFLNYQREQITLSGLQTFDFGVVRAALSEVNFILIVAYFRDSHQKRLWNSLHVAMICFKELLHISNSIFGKKRARTTNDDTIGDDEQYEIDRELAEGIIRKLFSFNEFLNTLVQVPQIAYKHSPRFLAESIRVITIILKSFESFAKEDLQLYVQTKRRRNKKKQQRINELDRDTESKLSTAIYESDEELAQENLREVTRERKLNFQATEVRFFHQNVVTTYIEYMSRFEDLTHEDIKMCLTYFHKLFVVRKDYNGLFRLDFMQLIYKLRNHLPKGSPIRLKVDEFIYYFMKKFKLAITRFPNPLEILFPRFEETRFKHYLSTGELYQLDTAVDPRAIRNLNKEVIDNDYNDAVDNDNNNDNYNEDDEDGIAFEIEANPEAADNHAYDLDRLDELESQLTNYQSRNKNRSSLEKGIAKKRNSRKKSTKTSKVNSDGGDSDDDDDDADAAAAAKAHRKRRVPRDLLFEEPKPLRSAEFINDSDDESDDEKNAEFFAREERLRQLLNQTGNITDAQKLEEFKKVWQQYSKTGGSIMQDAVANAVKEVSLFISDGDDDDDDGNGNENQKGKRKRTRDEADDFDGVSTILDSVQSQVLDNGSSQGNFASDAEVYHASSNTSDTELETNKRAKIDDAEEKEDEGKGEKEEDDNADEDEDEDEDVDGEESFPVVHHKKKRAIISDDEE.

Disordered regions lie at residues 894 to 982 (NYQS…DDEK) and 1043 to 1175 (SDGD…DDEE). Basic residues predominate over residues 910 to 921 (AKKRNSRKKSTK). Residues 930-940 (GDSDDDDDDAD) show a composition bias toward acidic residues. Over residues 954 to 966 (PRDLLFEEPKPLR) the composition is skewed to basic and acidic residues. The span at 1044–1053 (DGDDDDDDGN) shows a compositional bias: acidic residues. Residues 1078–1096 (ILDSVQSQVLDNGSSQGNF) show a composition bias toward polar residues. Residues 1137-1156 (EEDDNADEDEDEDEDVDGEE) are compositionally biased toward acidic residues.

The protein belongs to the timeless family. Component of the fork protection complex (FPC) consisting of TOF1 and CSM3.

Its subcellular location is the nucleus. Its function is as follows. Forms a fork protection complex (FPC) with CSM3 and which is required for chromosome segregation during meiosis and DNA damage repair. FPC coordinates leading and lagging strand synthesis and moves with the replication fork. FPC stabilizes replication forks in a configuration that is recognized by replication checkpoint sensors. In Lodderomyces elongisporus (strain ATCC 11503 / CBS 2605 / JCM 1781 / NBRC 1676 / NRRL YB-4239) (Yeast), this protein is Topoisomerase 1-associated factor 1 (TOF1).